A 112-amino-acid chain; its full sequence is Mitochondrial import inner membrane translocase subunit TIM14-3 (112 aa).

A2 carries the N-acetylalanine modification. A helical membrane pass occupies residues 6–28 (IAGAAVAAAAVAGRYGILAWQAF). The 60-residue stretch at 53 to 112 (EAALILGVRESVVADKVKEAHRRVMVANHPDAGGSHYLASKINEAKDMMLGKSNNSGSAF) folds into the J domain.

Belongs to the TIM14 family. As to quaternary structure, probable component of the PAM complex at least composed of a mitochondrial HSP70 protein, TIMM44 and TIMM14. The complex interacts with the TIMM23 component of the TIM17:23 complex.

Its subcellular location is the mitochondrion. It is found in the mitochondrion inner membrane. In terms of biological role, component of the PAM complex, a complex required for the translocation of transit peptide-containing proteins from the inner membrane into the mitochondrial matrix in an ATP-dependent manner. This is Mitochondrial import inner membrane translocase subunit TIM14-3 (TIM14-3) from Arabidopsis thaliana (Mouse-ear cress).